We begin with the raw amino-acid sequence, 440 residues long: Transposon Ty1-OL Gag polyprotein (440 aa).

Composition is skewed to polar residues over residues 1 to 23 (MESQ…SVTS), 48 to 60 (TKAN…TPAS), and 127 to 152 (QSQF…GNTF). Disordered regions lie at residues 1 to 93 (MESQ…MMTQ), 126 to 173 (PQSQ…RPPP), and 352 to 440 (GSRN…PGTY). Residues 153–165 (TDSSSADSDMTST) are compositionally biased toward low complexity. The tract at residues 299 to 401 (NNGIHINNKV…NSKSKTARAH (103 aa)) is RNA-binding. Low complexity predominate over residues 402–418 (NVSTSNNSPSTDNDSIS). S416 bears the Phosphoserine mark. The segment covering 419 to 428 (KSTTEPIQLN) has biased composition (polar residues). Residues 429-440 (NKHDLHLRPGTY) show a composition bias toward basic and acidic residues.

In terms of assembly, homotrimer.

It localises to the cytoplasm. In terms of biological role, capsid protein (CA) is the structural component of the virus-like particle (VLP), forming the shell that encapsulates the retrotransposons dimeric RNA genome. The particles are assembled from trimer-clustered units and there are holes in the capsid shells that allow for the diffusion of macromolecules. CA also has nucleocapsid-like chaperone activity, promoting primer tRNA(i)-Met annealing to the multipartite primer-binding site (PBS), dimerization of Ty1 RNA and initiation of reverse transcription. The polypeptide is Transposon Ty1-OL Gag polyprotein (TY1A-OL) (Saccharomyces cerevisiae (strain ATCC 204508 / S288c) (Baker's yeast)).